The primary structure comprises 494 residues: Protein DETOXIFICATION 21 (494 aa).

Ala-2 is subject to N-acetylalanine. The next 12 membrane-spanning stretches (helical) occupy residues 40–60, 73–95, 123–143, 158–178, 188–208, 217–237, 268–288, 297–317, 340–360, 384–404, 416–436, and 441–461; these read LWIV…VSII, LAAY…LGMA, IVLT…GPIL, IIAL…TCQM, IIAY…WLLM, GAMT…LLFV, GGML…TGNL, ALAI…GFLA, LTAV…FLFL, LLAF…VAVG, LACY…VVGL, and VWIG…VMTL.

Belongs to the multi antimicrobial extrusion (MATE) (TC 2.A.66.1) family.

It localises to the membrane. This Arabidopsis thaliana (Mouse-ear cress) protein is Protein DETOXIFICATION 21.